The chain runs to 352 residues: Heat-inducible transcription repressor HrcA (352 aa).

This sequence belongs to the HrcA family.

Its function is as follows. Negative regulator of class I heat shock genes (grpE-dnaK-dnaJ and groELS operons). Prevents heat-shock induction of these operons. This chain is Heat-inducible transcription repressor HrcA, found in Prochlorococcus marinus (strain MIT 9313).